The following is a 375-amino-acid chain: 4-hydroxy-3-methylbut-2-en-1-yl diphosphate synthase (flavodoxin) (375 aa).

Cys270, Cys273, Cys305, and Glu312 together coordinate [4Fe-4S] cluster.

This sequence belongs to the IspG family. The cofactor is [4Fe-4S] cluster.

The catalysed reaction is (2E)-4-hydroxy-3-methylbut-2-enyl diphosphate + oxidized [flavodoxin] + H2O + 2 H(+) = 2-C-methyl-D-erythritol 2,4-cyclic diphosphate + reduced [flavodoxin]. It participates in isoprenoid biosynthesis; isopentenyl diphosphate biosynthesis via DXP pathway; isopentenyl diphosphate from 1-deoxy-D-xylulose 5-phosphate: step 5/6. Converts 2C-methyl-D-erythritol 2,4-cyclodiphosphate (ME-2,4cPP) into 1-hydroxy-2-methyl-2-(E)-butenyl 4-diphosphate. The polypeptide is 4-hydroxy-3-methylbut-2-en-1-yl diphosphate synthase (flavodoxin) (Yersinia pestis (strain Pestoides F)).